Reading from the N-terminus, the 221-residue chain is Lectin L6 (221 aa).

Repeat copies occupy residues 1-38 (VQWH…PCYD), 39-75 (GQWT…VDGS), 76-113 (GSWV…KPCN), 114-150 (GAWT…VDGS), 151-188 (GSWQ…KPCS), and 189-221 (GQWS…YRSG). The 6 X approximate tandem repeats stretch occupies residues 1–221 (VQWHQIPGKL…NSVDNIYRSG (221 aa)). The cysteines at positions 32 and 36 are disulfide-linked. C108 and C112 form a disulfide bridge. C183 and C187 form a disulfide bridge.

The protein belongs to the tectonin family. Hemocytes.

The protein localises to the cytoplasmic vesicle. Its subcellular location is the secretory vesicle. Its function is as follows. Lipopolysaccharide-binding protein with Gram-negative antibacterial activity. Binds zinc and calcium. The sequence is that of Lectin L6 from Tachypleus tridentatus (Japanese horseshoe crab).